The chain runs to 92 residues: Plasmid copy control protein CopR (92 aa).

A compositionally biased stretch (basic and acidic residues) spans 1–27 (MELAFRESLKKMRGTKSKEKFSQELEM). 2 disordered regions span residues 1–40 (MELAFRESLKKMRGTKSKEKFSQELEMSRSNYSRIESGKS) and 63–92 (IPNEPTEPEPETEQVTLELEMEEEKSNDFV). Residues 9-62 (LKKMRGTKSKEKFSQELEMSRSNYSRIESGKSDPTIKTLEQIVKLTNSTLVVDL) form the HTH cro/C1-type domain. A DNA-binding region (H-T-H motif) is located at residues 20–39 (KFSQELEMSRSNYSRIESGK).

In terms of biological role, involved in copy control of plasmid pIP501. This is Plasmid copy control protein CopR (copR) from Streptococcus agalactiae.